We begin with the raw amino-acid sequence, 207 residues long: ATP-dependent dethiobiotin synthetase BioD (207 aa).

Residue 11–16 coordinates ATP; sequence DVGKTF. Position 15 (Thr15) interacts with Mg(2+). Lys31 is a catalytic residue. Substrate is bound at residue Ser35. ATP is bound by residues Asp42, 95 to 98, and 155 to 156; these read ETSG and NQ. Residues Asp42 and Glu95 each coordinate Mg(2+).

This sequence belongs to the dethiobiotin synthetase family. As to quaternary structure, homodimer. It depends on Mg(2+) as a cofactor.

It is found in the cytoplasm. It carries out the reaction (7R,8S)-7,8-diammoniononanoate + CO2 + ATP = (4R,5S)-dethiobiotin + ADP + phosphate + 3 H(+). Its pathway is cofactor biosynthesis; biotin biosynthesis; biotin from 7,8-diaminononanoate: step 1/2. Its function is as follows. Catalyzes a mechanistically unusual reaction, the ATP-dependent insertion of CO2 between the N7 and N8 nitrogen atoms of 7,8-diaminopelargonic acid (DAPA, also called 7,8-diammoniononanoate) to form a ureido ring. This chain is ATP-dependent dethiobiotin synthetase BioD, found in Chlamydia abortus (strain DSM 27085 / S26/3) (Chlamydophila abortus).